Consider the following 289-residue polypeptide: ATP synthase gamma chain (289 aa).

The protein belongs to the ATPase gamma chain family. In terms of assembly, F-type ATPases have 2 components, CF(1) - the catalytic core - and CF(0) - the membrane proton channel. CF(1) has five subunits: alpha(3), beta(3), gamma(1), delta(1), epsilon(1). CF(0) has three main subunits: a, b and c.

The protein resides in the cell inner membrane. In terms of biological role, produces ATP from ADP in the presence of a proton gradient across the membrane. The gamma chain is believed to be important in regulating ATPase activity and the flow of protons through the CF(0) complex. In Histophilus somni (strain 129Pt) (Haemophilus somnus), this protein is ATP synthase gamma chain.